Consider the following 242-residue polypeptide: Terpene cyclase cle7 (242 aa).

Helical transmembrane passes span 20–40, 50–69, 79–101, 117–137, 143–163, 172–192, and 207–227; these read LLLTLFSLSGTGWLINYITTI, GVSLVALTNNLAWELVFAIL, VILRSWLFVDIFVIYTTAKFARS, LFVLFGILGFFSGHWALSVLL, FYWSGMMCLVVMSGTALGILV, SYGMWFSRFVGSIFAVASLFL, and ILMRWFAGAFVVLDGLYGVCF.

The protein belongs to the paxB family.

It is found in the membrane. It participates in secondary metabolite biosynthesis; terpenoid biosynthesis. Non-reducing polyketide synthase; part of the cluster A that mediates the biosynthesis of chevalone E and its oxidized derivatives that possess a unique five-membered lactone ring and can synergistically enhance the cytotoxicity of doxorubicin (DOX) in breast cancer cells. Within the pathway, cle7 takes part to the biosynthesis of the molecular scaffold by catalyzing the cyclization of the prenyl group initiated by protonation and ring-opening of the epoxide to produce the chevalone E intermediate. The molecular scaffold is commonly biosynthesized by a series of enzymes including the non-reducing polyketide synthase (NR-PKS) cle1 that produces the alpha-pyrone triacetic acid lactone (TAL); The membrane-bound prenyltransferase cle5 that accepts TAL as its substrate to perform a C-3 geranylgeranylation reaction, in which the pathway-dedicated GGPS cle6 is required to provide GGPP, the other substrate of cle5; the FAD-dependent monooxygenase Cle3 that forms an (S)-epoxide ring at the terminal olefin of the geranylgeranyl group; and the terpene cyclase Cle7 that catalyzes the cyclization of the prenyl group that yields the pentacyclic pathway intermediate chevalone E. Chevalone E can derivatize into seven new oxidized analogs by the cytochrome P450 monooxygenases cle2 (acting at C-20) and cle4 (acting at C-11 and C-12). This chain is Terpene cyclase cle7, found in Aspergillus versicolor.